The following is a 586-amino-acid chain: Madf and zinc finger protein 1 (586 aa).

The involved in interaction with Cp190 stretch occupies residues 161 to 194; that stretch reads FMSEDDLAPPRKPGRPPRRTRPGQVFKFKVSFIR. The segment at residues 201–292 is a DNA-binding region (MADF 1); that stretch reads HLIQAYKEHP…KCEFLSVAPV (92 aa). Residues 294-319 are involved in interaction with Cp190; it reads TPRENEEDNDLTAIKLNFKEENLITT. The segment at residues 320–413 is a DNA-binding region (MADF 2); sequence SFIETYANYP…MCSFLPAKGS (94 aa). C2H2-type zinc fingers lie at residues 418–441, 448–471, 476–498, 504–527, 533–555, and 561–583; these read LYCD…VKAH, YLCS…LRSH, LKCQ…TLIH, HVCD…NGVH, YSCN…IKGH, and KKCE…RRSH.

Interacts (via regions flanking MADF domain 1) with Cp190 (via regions between the BTB domain and first zinc finger domain); the interaction is probably direct and is essential for protein function.

The protein localises to the nucleus. It is found in the chromosome. The protein resides in the nucleoplasm. Its function is as follows. Chromatin-binding protein involved in the organization of active promoters and insulators. Essential for the activity of heterochromatin promoters; primarily binds to specific motifs within promoters of housekeeping genes. May also associate to a lesser extent with promoters in euchromatin. Mediates recruitment of Cp190, a multifunctional protein involved in the recruitment of transcription complexes, the creation of open chromatin regions and the activity of insulators. Cooperates with pita and su(Hw) to recruit Cp190 and regulate insulator function at the front-ultraabdominal (Fub) boundary. May cooperate with other C2H2 zinc finger proteins, such as M1BP, to recruit CP190 to promoters. May be involved in cellular organization and development of the eye. This Drosophila melanogaster (Fruit fly) protein is Madf and zinc finger protein 1.